The following is a 1220-amino-acid chain: DNA polymerase catalytic subunit (1220 aa).

2 disordered regions span residues 21–43 (GKRP…RPPQ) and 641–691 (QADA…KPGV). Residues 646–660 (SETSELAMDSQSHAF) show a composition bias toward polar residues.

This sequence belongs to the DNA polymerase type-B family. As to quaternary structure, forms a complex with the ssDNA-binding protein, the DNA polymerase processivity factor, and the alkaline exonuclease. Interacts with the helicase-primase complex composed of the primase, the helicase and the primase-associated factor; this interaction may coordinate leading and lagging strand DNA synthesis at the replication fork.

It is found in the host nucleus. It catalyses the reaction DNA(n) + a 2'-deoxyribonucleoside 5'-triphosphate = DNA(n+1) + diphosphate. The catalysed reaction is Endonucleolytic cleavage to 5'-phosphomonoester.. Functionally, replicates viral genomic DNA. The replication complex is composed of six viral proteins: the DNA polymerase, processivity factor, primase, primase-associated factor, helicase, and ssDNA-binding protein. Additionally, the polymerase contains an intrinsic ribonuclease H (RNase H) activity that specifically degrades RNA/DNA heteroduplexes or duplex DNA substrates in the 5' to 3' direction. Therefore, it can catalyze the excision of the RNA primers that initiate the synthesis of Okazaki fragments at a replication fork during viral DNA replication. This chain is DNA polymerase catalytic subunit, found in Equine herpesvirus 1 (strain Ab4p) (EHV-1).